The sequence spans 113 residues: UPF0342 protein SZO_10960 (113 aa).

Belongs to the UPF0342 family.

This Streptococcus equi subsp. zooepidemicus (strain H70) protein is UPF0342 protein SZO_10960.